We begin with the raw amino-acid sequence, 285 residues long: Phosphatidylserine decarboxylase proenzyme (285 aa).

Active-site charge relay system; for autoendoproteolytic cleavage activity residues include D89, H146, and S252. The active-site Schiff-base intermediate with substrate; via pyruvic acid; for decarboxylase activity is the S252. S252 is subject to Pyruvic acid (Ser); by autocatalysis.

This sequence belongs to the phosphatidylserine decarboxylase family. PSD-B subfamily. Prokaryotic type I sub-subfamily. As to quaternary structure, heterodimer of a large membrane-associated beta subunit and a small pyruvoyl-containing alpha subunit. Pyruvate serves as cofactor. Is synthesized initially as an inactive proenzyme. Formation of the active enzyme involves a self-maturation process in which the active site pyruvoyl group is generated from an internal serine residue via an autocatalytic post-translational modification. Two non-identical subunits are generated from the proenzyme in this reaction, and the pyruvate is formed at the N-terminus of the alpha chain, which is derived from the carboxyl end of the proenzyme. The autoendoproteolytic cleavage occurs by a canonical serine protease mechanism, in which the side chain hydroxyl group of the serine supplies its oxygen atom to form the C-terminus of the beta chain, while the remainder of the serine residue undergoes an oxidative deamination to produce ammonia and the pyruvoyl prosthetic group on the alpha chain. During this reaction, the Ser that is part of the protease active site of the proenzyme becomes the pyruvoyl prosthetic group, which constitutes an essential element of the active site of the mature decarboxylase.

Its subcellular location is the cell membrane. The enzyme catalyses a 1,2-diacyl-sn-glycero-3-phospho-L-serine + H(+) = a 1,2-diacyl-sn-glycero-3-phosphoethanolamine + CO2. It participates in phospholipid metabolism; phosphatidylethanolamine biosynthesis; phosphatidylethanolamine from CDP-diacylglycerol: step 2/2. Catalyzes the formation of phosphatidylethanolamine (PtdEtn) from phosphatidylserine (PtdSer). This is Phosphatidylserine decarboxylase proenzyme from Vibrio vulnificus (strain CMCP6).